Consider the following 208-residue polypeptide: Histone H1t (208 aa).

Residues 1–12 are compositionally biased toward polar residues; that stretch reads MSETAPAASSTL. Residues 1-39 form a disordered region; that stretch reads MSETAPAASSTLVPAPVEKPATKRRGKKPGMATARKPRG. Serine 9 carries the phosphoserine modification. The H15 domain maps to 38–111; sequence RGFSVSKLIP…GASGSFKLSK (74 aa). Residue arginine 56 is modified to Citrulline. Residues 93 to 208 form a disordered region; sequence GVLVQTKGTG…TDLRKAAGRK (116 aa). Residues 121–134 show a composition bias toward basic residues; the sequence is KGKKSASAKAKKLG. The residue at position 141 (serine 141) is a Phosphoserine. Residues 143–154 are compositionally biased toward basic residues; it reads KSSKTKVVKKPK. Threonine 156 is subject to Phosphothreonine. 3 positions are modified to phosphoserine: serine 163, serine 178, and serine 187. The span at 199–208 shows a compositional bias: basic and acidic residues; that stretch reads TDLRKAAGRK.

It belongs to the histone H1/H5 family. In terms of processing, phosphorylated in early spermatids. Citrullination at Arg-56 (H1R54ci) by PADI4 takes place within the DNA-binding site of H1 and results in its displacement from chromatin and global chromatin decondensation, thereby promoting pluripotency and stem cell maintenance. As to expression, testis-specific. Expressed in pachytene spermatocytes during meiotic prophase I.

Its subcellular location is the nucleus. It localises to the chromosome. In terms of biological role, testis-specific histone H1 that forms less compacted chromatin compared to other H1 histone subtypes. Formation of more relaxed chromatin may be required to promote chromatin architecture required for proper chromosome regulation during meiosis, such as homologous recombination. Histones H1 act as linkers that bind to nucleosomes and compact polynucleosomes into a higher-order chromatin configuration. This chain is Histone H1t, found in Rattus norvegicus (Rat).